The chain runs to 268 residues: Bis(5'-nucleosyl)-tetraphosphatase, symmetrical (268 aa).

Belongs to the Ap4A hydrolase family.

The enzyme catalyses P(1),P(4)-bis(5'-adenosyl) tetraphosphate + H2O = 2 ADP + 2 H(+). Functionally, hydrolyzes diadenosine 5',5'''-P1,P4-tetraphosphate to yield ADP. The chain is Bis(5'-nucleosyl)-tetraphosphatase, symmetrical from Vibrio campbellii (strain ATCC BAA-1116).